A 457-amino-acid polypeptide reads, in one-letter code: D-hydantoinase (457 aa).

Zn(2+) is bound by residues His-57 and His-59. At Ser-69 the chain carries Phosphoserine. Zn(2+) is bound at residue Lys-148. Residue Lys-148 is modified to N6-carboxylysine. Tyr-153 serves as a coordination point for substrate. Zn(2+) is bound by residues His-181 and His-237. Position 286 (Thr-286) interacts with substrate. Asp-313 is a binding site for Zn(2+). Asn-335 is a substrate binding site.

Belongs to the metallo-dependent hydrolases superfamily. Hydantoinase/dihydropyrimidinase family. As to quaternary structure, homodimer and homotetramer. Requires Zn(2+) as cofactor. Post-translationally, carboxylation allows a single lysine to coordinate two zinc ions.

In terms of biological role, catalyzes the stereospecific hydrolysis of the cyclic amide bond of D-hydantoin derivatives. The protein is D-hydantoinase (hyuA) of Ralstonia pickettii (Burkholderia pickettii).